A 233-amino-acid chain; its full sequence is Large ribosomal subunit protein uL1 (233 aa).

It belongs to the universal ribosomal protein uL1 family. In terms of assembly, part of the 50S ribosomal subunit.

Functionally, binds directly to 23S rRNA. The L1 stalk is quite mobile in the ribosome, and is involved in E site tRNA release. In terms of biological role, protein L1 is also a translational repressor protein, it controls the translation of the L11 operon by binding to its mRNA. This chain is Large ribosomal subunit protein uL1, found in Brucella canis (strain ATCC 23365 / NCTC 10854 / RM-666).